The primary structure comprises 429 residues: MKLQKPKGTQDILPAESAKWQYVEGFAREIFKRYNYAEVRTPIFEHYEVISRSVGDTTDIVTKEMYDFYDKGDRHITLRPEGTAPVVRAYVENKLFAPEVQKPSKFYYMGPMFRYERPQAGRLRQFHQIGVECFGSSNPATDVETIVMAAHFLKEIGIQGVKLHLNTLGNPESRAAYRQALIDYLTPLKETLSKDSQRRLEENPLRVLDSKEKEDKVAVENAPSILDFLDEESQTHFDAVSQMLENLGVDYIIDTNMVRGLDYYNHTIFEFITEIEGNDLTVCAGGRYDGLVAYFGGPETAGFGFGLGVERLLLILEKQGVALPIENALDVYIAVLGDGANVKALELVQALRQQGFKAERDYLNRKLKAQFKSADVFAAKTLITLGESEVESRQVTVKNNQTREEVQVSLETISQNFSEIFEKLGFYTQ.

This sequence belongs to the class-II aminoacyl-tRNA synthetase family. As to quaternary structure, homodimer.

It is found in the cytoplasm. It catalyses the reaction tRNA(His) + L-histidine + ATP = L-histidyl-tRNA(His) + AMP + diphosphate + H(+). This chain is Histidine--tRNA ligase, found in Streptococcus pneumoniae (strain P1031).